Here is a 623-residue protein sequence, read N- to C-terminus: EIN3-binding F-box protein 2 (623 aa).

The 55-residue stretch at glutamine 52–valine 106 folds into the F-box domain. LRR repeat units lie at residues glycine 119–glycine 147, glutamate 151–asparagine 176, leucine 177–arginine 202, cysteine 203–serine 228, cysteine 229–serine 254, cysteine 255–methionine 281, leucine 307–serine 334, cysteine 335–lysine 360, cysteine 361–glutamate 386, cysteine 387–asparagine 413, cysteine 414–cysteine 441, cysteine 442–glycine 467, leucine 468–glutamate 494, cysteine 495–glycine 521, cysteine 522–asparagine 547, threonine 548–glycine 574, cysteine 575–arginine 600, and cysteine 601–tyrosine 623.

In terms of assembly, part of a SCF (SKP1-cullin-F-box) protein ligase complex. Interacts with CUL1, SKP1A/ASK1, SKP1B/ASK2, EIN3, and EIL1. Ubiquitous.

It is found in the nucleus. It functions in the pathway protein modification; protein ubiquitination. In terms of biological role, component of SCF(EBF1) E3 ubiquitin ligase complexes, which may mediate the ubiquitination and subsequent proteasomal degradation of target proteins (probably including EIN3 and EIL1). Regulator of the ethylene signaling cascade by modulating the stability of EIN3 and EIL1 proteins. The polypeptide is EIN3-binding F-box protein 2 (EBF2) (Arabidopsis thaliana (Mouse-ear cress)).